Here is a 292-residue protein sequence, read N- to C-terminus: Phosphoribulokinase, chromosomal (292 aa).

An ATP-binding site is contributed by 12–20; that stretch reads GSSGAGTTS.

This sequence belongs to the phosphoribulokinase family. In terms of assembly, homooctamer.

It carries out the reaction D-ribulose 5-phosphate + ATP = D-ribulose 1,5-bisphosphate + ADP + H(+). Its pathway is carbohydrate biosynthesis; Calvin cycle. The sequence is that of Phosphoribulokinase, chromosomal (cfxP) from Cupriavidus necator (strain ATCC 17699 / DSM 428 / KCTC 22496 / NCIMB 10442 / H16 / Stanier 337) (Ralstonia eutropha).